The following is a 205-amino-acid chain: Protein N-terminal glutamine amidohydrolase (205 aa).

Active-site residues include cysteine 20, histidine 74, and aspartate 90.

The protein belongs to the NTAQ1 family. In terms of assembly, monomer.

The catalysed reaction is N-terminal L-glutaminyl-[protein] + H2O = N-terminal L-glutamyl-[protein] + NH4(+). Mediates the side-chain deamidation of N-terminal glutamine residues to glutamate, an important step in N-end rule pathway of protein degradation. Conversion of the resulting N-terminal glutamine to glutamate renders the protein susceptible to arginylation, polyubiquitination and degradation as specified by the N-end rule. Does not act on substrates with internal or C-terminal glutamine and does not act on non-glutamine residues in any position. The sequence is that of Protein N-terminal glutamine amidohydrolase (tun) from Drosophila erecta (Fruit fly).